We begin with the raw amino-acid sequence, 472 residues long: 2-methylcitrate synthase, mitochondrial (472 aa).

A mitochondrion-targeting transit peptide spans 1 to 29; the sequence is MALNLTSSRRALGSLKPLTRAAFSGVRGY. CoA-binding residues include Arg-75 and Lys-193. His-271 is an oxaloacetate binding site. Leu-306 lines the CoA pocket. His-307 is an active-site residue. 3 residues coordinate CoA: Val-348, Gly-350, and Tyr-351. The oxaloacetate site is built by His-353 and Arg-362. His-353 is a catalytic residue. Positions 402, 403, and 408 each coordinate CoA. Asp-410 is a catalytic residue. The oxaloacetate site is built by Arg-436 and Arg-456.

Belongs to the citrate synthase family. As to quaternary structure, homodimer.

The protein resides in the mitochondrion matrix. It catalyses the reaction propanoyl-CoA + oxaloacetate + H2O = (2S,3S)-2-methylcitrate + CoA + H(+). It carries out the reaction oxaloacetate + acetyl-CoA + H2O = citrate + CoA + H(+). It functions in the pathway organic acid metabolism; propanoate degradation. Its function is as follows. Component of the methylcitrate cycle that catalyzes the synthesis of (2S,3S)-2-methylcitrate from propionyl-CoA and oxaloacetate. Plays an important role in detoxification of propionyl-CoA, an inhibitor of both primary and secondary metabolism. Also has citrate synthase activity using as substrates acetyl-CoA and oxaloacetate. This is 2-methylcitrate synthase, mitochondrial from Gibberella moniliformis (Maize ear and stalk rot fungus).